The following is a 418-amino-acid chain: Serpin A9 (418 aa).

The signal sequence occupies residues 1–25 (MGSSSFYRVLLLVGFCAPIFCMLSS). N-linked (GlcNAc...) asparagine glycosylation is found at asparagine 103, asparagine 213, and asparagine 224.

Belongs to the serpin family.

Its subcellular location is the secreted. The polypeptide is Serpin A9 (Serpina9) (Mus musculus (Mouse)).